Reading from the N-terminus, the 96-residue chain is Putative pterin-4-alpha-carbinolamine dehydratase (96 aa).

Belongs to the pterin-4-alpha-carbinolamine dehydratase family.

It carries out the reaction (4aS,6R)-4a-hydroxy-L-erythro-5,6,7,8-tetrahydrobiopterin = (6R)-L-erythro-6,7-dihydrobiopterin + H2O. This is Putative pterin-4-alpha-carbinolamine dehydratase from Novosphingobium aromaticivorans (strain ATCC 700278 / DSM 12444 / CCUG 56034 / CIP 105152 / NBRC 16084 / F199).